We begin with the raw amino-acid sequence, 300 residues long: Delta(7)-sterol 5(6)-desaturase erg31 (300 aa).

A run of 3 helical transmembrane segments spans residues Ile-33 to Leu-53, Val-78 to Ala-98, and Tyr-117 to His-137. The 126-residue stretch at Pro-123–Asn-248 folds into the Fatty acid hydroxylase domain. Positions His-137–His-141 match the Histidine box-1 motif. Positions His-150 to His-154 match the Histidine box-2 motif. The chain crosses the membrane as a helical span at residues His-180–Val-200. A Histidine box-3 motif is present at residues His-225–His-229.

The protein belongs to the sterol desaturase family. The cofactor is Fe cation.

It is found in the endoplasmic reticulum membrane. It carries out the reaction episterol + 2 Fe(II)-[cytochrome b5] + O2 + 2 H(+) = 5-dehydroepisterol + 2 Fe(III)-[cytochrome b5] + 2 H2O. Its pathway is steroid metabolism; ergosterol biosynthesis. Its function is as follows. C-5 sterol desaturase; part of the third module of ergosterol biosynthesis pathway that includes by the late steps of the pathway. Erg31 and erg32 catalyze the introduction of a C-5 double bond in the B ring to produce 5-dehydroepisterol. The third module or late pathway involves the ergosterol synthesis itself through consecutive reactions that mainly occur in the endoplasmic reticulum (ER) membrane. Firstly, the squalene synthase erg9 catalyzes the condensation of 2 farnesyl pyrophosphate moieties to form squalene, which is the precursor of all steroids. Secondly, squalene is converted into lanosterol by the consecutive action of the squalene epoxidase erg1 and the lanosterol synthase erg7. The lanosterol 14-alpha-demethylase erg11/cyp1 catalyzes C14-demethylation of lanosterol to produce 4,4'-dimethyl cholesta-8,14,24-triene-3-beta-ol. In the next steps, a complex process involving various demethylation, reduction and desaturation reactions catalyzed by the C-14 reductase erg24 and the C-4 demethylation complex erg25-erg26-erg27 leads to the production of zymosterol. Erg28 likely functions in the C-4 demethylation complex reaction by tethering erg26 and Erg27 to the endoplasmic reticulum or to facilitate interaction between these proteins. Then, the sterol 24-C-methyltransferase erg6 catalyzes the methyl transfer from S-adenosyl-methionine to the C-24 of zymosterol to form fecosterol. The C-8 sterol isomerase erg2 catalyzes the reaction which results in unsaturation at C-7 in the B ring of sterols and thus converts fecosterol to episterol. The sterol-C5-desaturases erg31 and erg32 then catalyze the introduction of a C-5 double bond in the B ring to produce 5-dehydroepisterol. The C-22 sterol desaturase erg5 further converts 5-dehydroepisterol into ergosta-5,7,22,24(28)-tetraen-3beta-ol by forming the C-22(23) double bond in the sterol side chain. Finally, ergosta-5,7,22,24(28)-tetraen-3beta-ol is substrate of the C-24(28) sterol reductase erg4 to produce ergosterol. In the genus Schizosaccharomyces, a second route exists between lanosterol and fecosterol, via the methylation of lanosterol to eburicol by erg6, followed by C14-demethylation by erg11/cyp1 and C4-demethylation by the demethylation complex erg25-erg26-erg27. The sequence is that of Delta(7)-sterol 5(6)-desaturase erg31 from Schizosaccharomyces pombe (strain 972 / ATCC 24843) (Fission yeast).